Reading from the N-terminus, the 146-residue chain is Transcriptional regulator MraZ (146 aa).

2 consecutive SpoVT-AbrB domains span residues 7-54 and 83-126; these read NATN…GLDL and GVFV…QPEA.

This sequence belongs to the MraZ family. In terms of assembly, forms oligomers.

The protein resides in the cytoplasm. Its subcellular location is the nucleoid. This chain is Transcriptional regulator MraZ, found in Rhizobium rhizogenes (strain K84 / ATCC BAA-868) (Agrobacterium radiobacter).